The following is an 81-amino-acid chain: Photosystem I iron-sulfur center (81 aa).

4Fe-4S ferredoxin-type domains lie at 2–31 and 39–68; these read SHSV…MVPW and IASA…VRVY. Residues Cys-11, Cys-14, Cys-17, Cys-21, Cys-48, Cys-51, Cys-54, and Cys-58 each coordinate [4Fe-4S] cluster.

As to quaternary structure, the eukaryotic PSI reaction center is composed of at least 11 subunits. [4Fe-4S] cluster is required as a cofactor.

It is found in the plastid. The protein resides in the chloroplast thylakoid membrane. The enzyme catalyses reduced [plastocyanin] + hnu + oxidized [2Fe-2S]-[ferredoxin] = oxidized [plastocyanin] + reduced [2Fe-2S]-[ferredoxin]. In terms of biological role, apoprotein for the two 4Fe-4S centers FA and FB of photosystem I (PSI); essential for photochemical activity. FB is the terminal electron acceptor of PSI, donating electrons to ferredoxin. The C-terminus interacts with PsaA/B/D and helps assemble the protein into the PSI complex. Required for binding of PsaD and PsaE to PSI. PSI is a plastocyanin/cytochrome c6-ferredoxin oxidoreductase, converting photonic excitation into a charge separation, which transfers an electron from the donor P700 chlorophyll pair to the spectroscopically characterized acceptors A0, A1, FX, FA and FB in turn. The sequence is that of Photosystem I iron-sulfur center from Pleurastrum terricola (Filamentous green alga).